Reading from the N-terminus, the 1620-residue chain is ABC-type organic anion transporter ABCA8B (1620 aa).

7 helical membrane-spanning segments follow: residues 30 to 50, 223 to 243, 267 to 287, 298 to 318, 326 to 346, 352 to 372, and 396 to 416; these read SLME…YPHG, FFIF…SINV, SWGL…ALVI, FMVV…LAFL, SVLT…LGFT, LPAP…TLGM, and LIIA…ALMM. One can recognise an ABC transporter 1 domain in the interval 479–714; the sequence is IRIRNISKEY…WGVGYHLSLQ (236 aa). Residue 515 to 522 participates in ATP binding; sequence GHSGAGKS. Asparagine 723 is a glycosylation site (N-linked (GlcNAc...) asparagine). 8 consecutive transmembrane segments (helical) span residues 860 to 880, 979 to 999, 1023 to 1043, 1069 to 1089, 1105 to 1125, 1135 to 1155, 1164 to 1184, and 1194 to 1214; these read TLLS…FENI, CFPV…KPSA, TAFW…SSVT, MVDI…DYLF, IPCS…ISFI, IWSL…LLAF, IIFL…LHLF, and VIEP…FIFT. Positions 1283–1516 constitute an ABC transporter 2 domain; sequence LRKEYAGKQK…FGKDYLLEMK (234 aa). 1321–1328 contacts ATP; the sequence is GHNGAGKS.

This sequence belongs to the ABC transporter superfamily. ABCA family. In terms of tissue distribution, expressed in heart, brain, lung, liver and skeletal muscle. Highly expressed in the liver, and is also abundant in heart and skeletal muscle. Highly expressed in liver.

Its subcellular location is the cell membrane. The protein resides in the basolateral cell membrane. The enzyme catalyses taurocholate(in) + ATP + H2O = taurocholate(out) + ADP + phosphate + H(+). The catalysed reaction is cholesterol(in) + ATP + H2O = cholesterol(out) + ADP + phosphate + H(+). Its activity is regulated as follows. Cholesterol efflux is increased by extracellularly applied taurocholate. Mediates cholesterol and taurocholate efflux. Through the interaction with ABCA1 potentiates the cholesterol efflux to lipid-free APOA1, in turn regulates high-density lipoprotein cholesterol levels. This chain is ABC-type organic anion transporter ABCA8B, found in Mus musculus (Mouse).